A 127-amino-acid chain; its full sequence is Vacuolar ATPase assembly integral membrane protein VMA21 (127 aa).

The disordered stretch occupies residues 1–28 (MATRRNPTKESITTSPPPDQQPRQPGEL). The Cytoplasmic segment spans residues 1 to 45 (MATRRNPTKESITTSPPPDQQPRQPGELEHREAIQLRDLPGYPQQ). The chain crosses the membrane as a helical span at residues 46–66 (VLWKLIIYSIAVLVLPLSAYF). Topologically, residues 67 to 79 (YSVNYVFDGNTTY) are lumenal. The helical transmembrane segment at 80–100 (AGATAAITANLILFSYIVVAM) threads the bilayer. Topologically, residues 101-127 (REDKGDQEQLREQQQLRGNKEETKKMK) are cytoplasmic. The tract at residues 107 to 127 (QEQLREQQQLRGNKEETKKMK) is disordered. Residues 118–127 (GNKEETKKMK) are compositionally biased toward basic and acidic residues. The Prevents secretion from ER signature appears at 124–127 (KKMK).

The protein belongs to the VMA21 family.

Its subcellular location is the endoplasmic reticulum membrane. The protein resides in the endoplasmic reticulum-Golgi intermediate compartment membrane. It is found in the cytoplasmic vesicle. The protein localises to the COPII-coated vesicle membrane. Required for the assembly of the V0 complex of the vacuolar ATPase (V-ATPase) in the endoplasmic reticulum. This Coccidioides immitis (strain RS) (Valley fever fungus) protein is Vacuolar ATPase assembly integral membrane protein VMA21.